Consider the following 442-residue polypeptide: D-serine dehydratase (442 aa).

Lys-118 is subject to N6-(pyridoxal phosphate)lysine.

This sequence belongs to the serine/threonine dehydratase family. DsdA subfamily. In terms of assembly, monomer. It depends on pyridoxal 5'-phosphate as a cofactor.

The enzyme catalyses D-serine = pyruvate + NH4(+). The sequence is that of D-serine dehydratase from Shigella dysenteriae serotype 1 (strain Sd197).